The sequence spans 1527 residues: DNA-directed RNA polymerase subunit beta'' (1527 aa).

Zn(2+) is bound by residues cysteine 220, cysteine 296, cysteine 303, and cysteine 306. Composition is skewed to basic and acidic residues over residues 644 to 661 and 671 to 681; these read RTQE…RTRE and PENKYRTREGE. Disordered stretches follow at residues 644-681 and 712-793; these read RTQE…REGE and YRTL…KKEG. Acidic residues-rich tracts occupy residues 737–755 and 763–786; these read GEYE…SSED and TLEE…PEED.

It belongs to the RNA polymerase beta' chain family. RpoC2 subfamily. In plastids the minimal PEP RNA polymerase catalytic core is composed of four subunits: alpha, beta, beta', and beta''. When a (nuclear-encoded) sigma factor is associated with the core the holoenzyme is formed, which can initiate transcription. The cofactor is Zn(2+).

Its subcellular location is the plastid. The protein localises to the chloroplast. It carries out the reaction RNA(n) + a ribonucleoside 5'-triphosphate = RNA(n+1) + diphosphate. Its function is as follows. DNA-dependent RNA polymerase catalyzes the transcription of DNA into RNA using the four ribonucleoside triphosphates as substrates. This is DNA-directed RNA polymerase subunit beta'' from Zea mays (Maize).